The primary structure comprises 271 residues: Homeobox protein pal-1 (271 aa).

Disordered regions lie at residues 1-25 (MSVD…TNVN), 100-135 (PPLS…ASSS), and 178-202 (GSAG…TNNV). Composition is skewed to low complexity over residues 100–117 (PPLS…YPSP) and 125–135 (STSSGIGASSS). Residues 189–202 (DTKSLPTGPGTNNV) are compositionally biased toward polar residues. Residues 207–266 (ADKYRMVYSDYQRLELEKEFHTSAFITSDRKSQLSTMLSLTERQIKIWFQNRRAKDRRDK) constitute a DNA-binding region (homeobox).

Belongs to the Caudal homeobox family. As to quaternary structure, interacts with tir-1 and let-756.

It localises to the nucleus. Its subcellular location is the chromosome. It is found in the centromere. The protein resides in the kinetochore. Transcriptional activator. Interacts with promoter regions for tbx-8.9, tbx-9, elt-1, hnd-1, scrt-1, and vab-7 genes. Binds the sequence ATTTATGAC. Binds to the enhancer region of the hlh-1 gene promoter during embryonic body wall muscle development. Activates the gene for mab-5 in embryo development. Necessary for vab-7 expression in C blastomeres in the posterior of embryos. Required for posterior V6 neuroectoblast cell fate specification during postembryonic neurogenesis (patterning) which generates the characteristic ray lineage during male tail development. Binds to ced-3 promoter and activated expression which is crucial for tail-spike cell death. Has a role in E cell specification in endoderm development and body wall muscle development. The sequence is that of Homeobox protein pal-1 from Caenorhabditis briggsae.